The primary structure comprises 113 residues: Large ribosomal subunit protein uL22 (113 aa).

This sequence belongs to the universal ribosomal protein uL22 family. Part of the 50S ribosomal subunit.

In terms of biological role, this protein binds specifically to 23S rRNA; its binding is stimulated by other ribosomal proteins, e.g. L4, L17, and L20. It is important during the early stages of 50S assembly. It makes multiple contacts with different domains of the 23S rRNA in the assembled 50S subunit and ribosome. Functionally, the globular domain of the protein is located near the polypeptide exit tunnel on the outside of the subunit, while an extended beta-hairpin is found that lines the wall of the exit tunnel in the center of the 70S ribosome. The polypeptide is Large ribosomal subunit protein uL22 (Bacillus mycoides (strain KBAB4) (Bacillus weihenstephanensis)).